A 376-amino-acid polypeptide reads, in one-letter code: MTIAPDPVDLAARLIACKSVTPSDDGAMNIMADALKSAGFTVHLLTKGQAPDGPVTNLIAIRGEGYPHLAYAGHSDVVPAGQGWSSDPFTPTIKDGYLVGRGAVDMKSSVAAFIAAASRYTEHKGTLSLLITGDEEGPATFGTPAIIEWLNEQSIKPDYCLVGEPTSVERLGDTVKNGRRGSVNMWIEVEGIQGHVAYPDRACNPIPVLARIISDLESWVLDKGDQWFQPSNLEVTSIECDNKATNVIPALAKAQLNIRFNALHKGAELVDSLKKRVAAIDPKARVKAAISGEAFVTEEGVLTDTISAAIAKNTGITPSLSTSGGTSDARFLTKLCPVVEFGLVNATMHKVDEKASVEDIRQLSRIDEDIIKSFLG.

Histidine 74 contacts Zn(2+). Residue aspartate 76 is part of the active site. A Zn(2+)-binding site is contributed by aspartate 105. Residue glutamate 135 is the Proton acceptor of the active site. Positions 136, 164, and 349 each coordinate Zn(2+).

Belongs to the peptidase M20A family. DapE subfamily. As to quaternary structure, homodimer. The cofactor is Zn(2+). Requires Co(2+) as cofactor.

It catalyses the reaction N-succinyl-(2S,6S)-2,6-diaminopimelate + H2O = (2S,6S)-2,6-diaminopimelate + succinate. It functions in the pathway amino-acid biosynthesis; L-lysine biosynthesis via DAP pathway; LL-2,6-diaminopimelate from (S)-tetrahydrodipicolinate (succinylase route): step 3/3. In terms of biological role, catalyzes the hydrolysis of N-succinyl-L,L-diaminopimelic acid (SDAP), forming succinate and LL-2,6-diaminopimelate (DAP), an intermediate involved in the bacterial biosynthesis of lysine and meso-diaminopimelic acid, an essential component of bacterial cell walls. This Zymomonas mobilis subsp. mobilis (strain ATCC 31821 / ZM4 / CP4) protein is Succinyl-diaminopimelate desuccinylase.